The sequence spans 100 residues: Tachykinin-4 (100 aa).

Positions 1 to 19 (MPSSVTLLLLMGLSVCTSA) are cleaved as a signal peptide. 2 consecutive propeptides follow at residues 20-55 (EDGG…LQEV) and 85-100 (RASS…QGAE). The disordered stretch occupies residues 80–100 (GLLGRRASSTKGSVDEDQGAE).

The protein belongs to the tachykinin family.

The protein localises to the secreted. Tachykinins are active peptides which excite neurons, evoke behavioral responses, are potent vasodilators and secretagogues, and contract (directly or indirectly) many smooth muscles. This is Tachykinin-4 from Oryctolagus cuniculus (Rabbit).